A 271-amino-acid polypeptide reads, in one-letter code: uncharacterized protein (271 aa).

It belongs to the metallo-dependent hydrolases superfamily. Peptidase M19 family.

This is an uncharacterized protein from Klebsiella pneumoniae.